Here is a 1082-residue protein sequence, read N- to C-terminus: uncharacterized protein (1082 aa).

Positions 50–319 (TTMTGGVSLA…LDNRPIGVLF (270 aa)) constitute a PNPLA domain. The short motif at 120 to 124 (GTSAG) is the GXSXG element. Ser122 (nucleophile) is an active-site residue. Catalysis depends on Asp306, which acts as the Proton acceptor. A DGA/G motif is present at residues 306-308 (DGG). 4 helical membrane passes run 959 to 979 (IARS…AAAI), 982 to 1002 (VTVF…LVVL), 1012 to 1032 (LFAL…TPVV), and 1057 to 1077 (WWHP…IAAA).

The protein resides in the cell membrane. This is an uncharacterized protein from Mycobacterium tuberculosis (strain ATCC 25618 / H37Rv).